A 122-amino-acid polypeptide reads, in one-letter code: Large ribosomal subunit protein uL14 (122 aa).

It belongs to the universal ribosomal protein uL14 family. In terms of assembly, part of the 50S ribosomal subunit. Forms a cluster with proteins L3 and L19. In the 70S ribosome, L14 and L19 interact and together make contacts with the 16S rRNA in bridges B5 and B8.

Functionally, binds to 23S rRNA. Forms part of two intersubunit bridges in the 70S ribosome. The polypeptide is Large ribosomal subunit protein uL14 (Burkholderia multivorans (strain ATCC 17616 / 249)).